The chain runs to 324 residues: Granaticin polyketide synthase bifunctional cyclase/dehydratase (324 aa).

The segment at 1-21 is disordered; it reads MVQPAATPVSLPSPTVHRSEH.

It participates in antibiotic biosynthesis; granaticin biosynthesis. In terms of biological role, is needed for correct cyclization of the oligoketide leading to isochromanequinone formation. The chain is Granaticin polyketide synthase bifunctional cyclase/dehydratase (gra-orf4) from Streptomyces violaceoruber.